We begin with the raw amino-acid sequence, 1088 residues long: RNA-directed RNA polymerase (1088 aa).

Residues 501–687 (LSYGDVTRFL…AKRYIAGGKI (187 aa)) enclose the RdRp catalytic domain.

The protein belongs to the reoviridae RNA-directed RNA polymerase family. In terms of assembly, interacts with VP3 (Potential). Interacts with VP2; this interaction activates VP1. Interacts with NSP5; this interaction is probably necessary for the formation of functional virus factories. Interacts with NSP2; this interaction is weak. It depends on Mg(2+) as a cofactor.

It localises to the virion. It catalyses the reaction RNA(n) + a ribonucleoside 5'-triphosphate = RNA(n+1) + diphosphate. In terms of biological role, RNA-directed RNA polymerase that is involved in both transcription and genome replication. Together with VP3 capping enzyme, forms an enzyme complex positioned near the channels situated at each of the five-fold vertices of the core. Following infection, the outermost layer of the virus is lost, leaving a double-layered particle (DLP) made up of the core and VP6 shell. VP1 then catalyzes the transcription of fully conservative plus-strand genomic RNAs that are extruded through the DLP's channels into the cytoplasm where they function as mRNAs for translation of viral proteins. One copy of each of the viral (+)RNAs is also recruited during core assembly, together with newly synthesized polymerase complexes and VP2. The polymerase of these novo-formed particles catalyzes the synthesis of complementary minus-strands leading to dsRNA formation. To do so, the polymerase specifically recognizes and binds 4 bases 5'-UGUG-3' in the conserved 3'-sequence of plus-strand RNA templates. VP2 presumably activates the autoinhibited VP1-RNA complex to coordinate packaging and genome replication. Once dsRNA synthesis is complete, the polymerase switches to the transcriptional mode, thus providing secondary transcription. In Rotavirus A (strain RVA/Human/Philippines/L26/1987/G12P1B[4]) (RV-A), this protein is RNA-directed RNA polymerase.